The chain runs to 225 residues: Claudin-8 (225 aa).

Topologically, residues 1 to 7 are cytoplasmic; the sequence is MATYALQ. A helical membrane pass occupies residues 8 to 28; the sequence is MAALVLGGVGMVGTVAVTIMP. Over 29–81 the chain is Extracellular; that stretch reads QWRVSAFIESNIVVFENRWEGLWMNCMRHANIRMQCKVYDSLLALSPDLQASR. A helical membrane pass occupies residues 82–102; it reads GLMCAASVLAFLAFMTAILGM. Over 103–117 the chain is Cytoplasmic; sequence KCTRCTGDDENVKSR. A helical membrane pass occupies residues 118 to 138; it reads ILLTAGIIFFITGLVVLIPVS. Residues 139–166 lie on the Extracellular side of the membrane; it reads WVANSIIRDFYNPLVDVALKRELGEALY. The helical transmembrane segment at 167–187 threads the bilayer; the sequence is IGWTTALVLIAGGALFCCVFC. Residues 188 to 225 are Cytoplasmic-facing; that stretch reads CTERSNSYRYSVPSHRTTQRSFHAEKRSPSIYSKSQYV. Residue Lys-213 forms a Glycyl lysine isopeptide (Lys-Gly) (interchain with G-Cter in ubiquitin) linkage. Residues 224 to 225 are interactions with TJP1, TJP2 and TJP3; sequence YV.

The protein belongs to the claudin family. In terms of assembly, can form heteropolymeric strands with other claudins. Interacts with CLDN4. Directly interacts with TJP1/ZO-1, TJP2/ZO-2 and TJP3/ZO-3. Interacts with KLHL3. Ubiquitinated by the BCR(KLHL3) E3 ubiquitin ligase complex in the kidney, leading to its degradation. In terms of tissue distribution, expressed primarily in lung and kidney. Present in both cortical and medullar collecting ducts (at protein level).

It localises to the cell junction. It is found in the tight junction. Its subcellular location is the cell membrane. It catalyses the reaction chloride(in) = chloride(out). The enzyme catalyses bromide(in) = bromide(out). It carries out the reaction iodide(out) = iodide(in). The catalysed reaction is fluoride(in) = fluoride(out). Can associate with other claudins to regulate tight junction structural and functional strand dynamics. May coassemble with CLDN4 into tight junction strands containing anion-selective channels that convey paracellular chloride permeability in renal collecting ducts. Cannot form tight junction strands on its own. This Mus musculus (Mouse) protein is Claudin-8.